The following is a 383-amino-acid chain: tRNA-specific 2-thiouridylase MnmA (383 aa).

Residues 9–16 (GMSGGVDS) and Met35 contribute to the ATP site. Residues 95–97 (NPD) are interaction with target base in tRNA. The Nucleophile role is filled by Cys100. Cys100 and Cys196 are joined by a disulfide. Gly124 is a binding site for ATP. Positions 146-148 (KDQ) are interaction with tRNA. Catalysis depends on Cys196, which acts as the Cysteine persulfide intermediate. An interaction with tRNA region spans residues 308–309 (RY).

The protein belongs to the MnmA/TRMU family.

It is found in the cytoplasm. It carries out the reaction S-sulfanyl-L-cysteinyl-[protein] + uridine(34) in tRNA + AH2 + ATP = 2-thiouridine(34) in tRNA + L-cysteinyl-[protein] + A + AMP + diphosphate + H(+). In terms of biological role, catalyzes the 2-thiolation of uridine at the wobble position (U34) of tRNA, leading to the formation of s(2)U34. This is tRNA-specific 2-thiouridylase MnmA from Burkholderia pseudomallei (strain 668).